Consider the following 123-residue polypeptide: MPTVNQLIAKPRKAPVKRNKVPAMEANPQKRGVCTRVYTTSPKKPNSAMRKVAKIRLANGFEVIGYIPGEGHNLQEHSVVMIRGGRVKDLPGVRYHIIRGVLDTQGVKSRKQRRSKYGAKRPK.

At D89 the chain carries 3-methylthioaspartic acid.

It belongs to the universal ribosomal protein uS12 family. Part of the 30S ribosomal subunit. Contacts proteins S8 and S17. May interact with IF1 in the 30S initiation complex.

Functionally, with S4 and S5 plays an important role in translational accuracy. In terms of biological role, interacts with and stabilizes bases of the 16S rRNA that are involved in tRNA selection in the A site and with the mRNA backbone. Located at the interface of the 30S and 50S subunits, it traverses the body of the 30S subunit contacting proteins on the other side and probably holding the rRNA structure together. The combined cluster of proteins S8, S12 and S17 appears to hold together the shoulder and platform of the 30S subunit. In Chelativorans sp. (strain BNC1), this protein is Small ribosomal subunit protein uS12.